A 115-amino-acid polypeptide reads, in one-letter code: Biotrophy-associated secreted protein 1 (115 aa).

A signal peptide spans 1-22 (MHVFNFAALFTVLATFTATAAA). A disordered region spans residues 24–115 (DQGSNTFDQR…GIRRVENYYP (92 aa)). Composition is skewed to basic and acidic residues over residues 46-55 (IREEKQENVG) and 91-115 (QQKE…NYYP).

It is found in the secreted. It localises to the host cytoplasm. In terms of biological role, secreted effector involved in biotrophic colonization of plant cells. Induces an early, basal defense response in susceptible rice, including rapid callose deposition and ROS production in leaves and calli. Also promotes sporulation and mycelia growth suggesting a role across the whole process of interaction, from the biotrophic phase to sporulation. This chain is Biotrophy-associated secreted protein 1, found in Pyricularia oryzae (strain 70-15 / ATCC MYA-4617 / FGSC 8958) (Rice blast fungus).